The chain runs to 158 residues: MAKERGQKVVATNRRARHDYTIEDTYEAGLVLTGTEVKSLRLGRASLVDGYAFVDGGEAWLDAVHIPEYADGTWNNHAPRRKRKLLLHKAQILKIESKVKQGGYTIVPLQIYFNDGRAKVEIGVAKGKREYDKRQALRERQDNREAQRAMASRKHLGE.

Basic and acidic residues predominate over residues 133–147 (KRQALRERQDNREAQ). Residues 133–158 (KRQALRERQDNREAQRAMASRKHLGE) form a disordered region.

This sequence belongs to the SmpB family.

The protein resides in the cytoplasm. Functionally, required for rescue of stalled ribosomes mediated by trans-translation. Binds to transfer-messenger RNA (tmRNA), required for stable association of tmRNA with ribosomes. tmRNA and SmpB together mimic tRNA shape, replacing the anticodon stem-loop with SmpB. tmRNA is encoded by the ssrA gene; the 2 termini fold to resemble tRNA(Ala) and it encodes a 'tag peptide', a short internal open reading frame. During trans-translation Ala-aminoacylated tmRNA acts like a tRNA, entering the A-site of stalled ribosomes, displacing the stalled mRNA. The ribosome then switches to translate the ORF on the tmRNA; the nascent peptide is terminated with the 'tag peptide' encoded by the tmRNA and targeted for degradation. The ribosome is freed to recommence translation, which seems to be the essential function of trans-translation. This chain is SsrA-binding protein, found in Leifsonia xyli subsp. xyli (strain CTCB07).